The primary structure comprises 293 residues: Ribosomal protein L11 methyltransferase (293 aa).

The S-adenosyl-L-methionine site is built by Thr145, Gly166, Asp188, and Asn230.

It belongs to the methyltransferase superfamily. PrmA family.

The protein resides in the cytoplasm. It catalyses the reaction L-lysyl-[protein] + 3 S-adenosyl-L-methionine = N(6),N(6),N(6)-trimethyl-L-lysyl-[protein] + 3 S-adenosyl-L-homocysteine + 3 H(+). In terms of biological role, methylates ribosomal protein L11. The protein is Ribosomal protein L11 methyltransferase of Haemophilus ducreyi (strain 35000HP / ATCC 700724).